Here is a 188-residue protein sequence, read N- to C-terminus: Elongation factor P (188 aa).

This sequence belongs to the elongation factor P family.

It localises to the cytoplasm. It participates in protein biosynthesis; polypeptide chain elongation. Functionally, involved in peptide bond synthesis. Stimulates efficient translation and peptide-bond synthesis on native or reconstituted 70S ribosomes in vitro. Probably functions indirectly by altering the affinity of the ribosome for aminoacyl-tRNA, thus increasing their reactivity as acceptors for peptidyl transferase. The protein is Elongation factor P of Bdellovibrio bacteriovorus (strain ATCC 15356 / DSM 50701 / NCIMB 9529 / HD100).